The following is a 369-amino-acid chain: uncharacterized protein (369 aa).

Belongs to the Gfo/Idh/MocA family.

This is an uncharacterized protein from Schizosaccharomyces pombe (strain 972 / ATCC 24843) (Fission yeast).